The primary structure comprises 443 residues: Na(+)-translocating ferredoxin:NAD(+) oxidoreductase complex subunit C (443 aa).

4Fe-4S ferredoxin-type domains follow at residues 359–391 and 398–428; these read ESAKIATPSNCIHCGKCVGVCPIHLQPLNIAEY and DKCESNNAMDCIECGSCSYICPAKRTLVSSI. The [4Fe-4S] cluster site is built by cysteine 369, cysteine 372, cysteine 375, cysteine 379, cysteine 408, cysteine 411, cysteine 414, and cysteine 418.

This sequence belongs to the 4Fe4S bacterial-type ferredoxin family. RnfC subfamily. The complex is composed of six subunits: RnfA, RnfB, RnfC, RnfD, RnfE and RnfG. It depends on [4Fe-4S] cluster as a cofactor.

The protein resides in the cell membrane. It catalyses the reaction 2 reduced [2Fe-2S]-[ferredoxin] + Na(+)(in) + NAD(+) + H(+) = 2 oxidized [2Fe-2S]-[ferredoxin] + Na(+)(out) + NADH. Part of a membrane-bound complex that couples electron transfer with translocation of ions across the membrane. Couples electron transfer from reduced ferredoxin to NAD(+) with electrogenic movement of Na(+) out of the cell. Involved in caffeate respiration. The chain is Na(+)-translocating ferredoxin:NAD(+) oxidoreductase complex subunit C from Acetobacterium woodii (strain ATCC 29683 / DSM 1030 / JCM 2381 / KCTC 1655 / WB1).